Here is a 197-residue protein sequence, read N- to C-terminus: GTP cyclohydrolase-2 (197 aa).

50-54 (RIHSE) is a GTP binding site. Zn(2+)-binding residues include Cys-55, Cys-66, and Cys-68. Residues Gln-71, 93–95 (EGR), and Thr-115 contribute to the GTP site. Asp-127 functions as the Proton acceptor in the catalytic mechanism. Arg-129 functions as the Nucleophile in the catalytic mechanism. Residues Thr-150 and Lys-155 each contribute to the GTP site.

Belongs to the GTP cyclohydrolase II family. Requires Zn(2+) as cofactor.

The enzyme catalyses GTP + 4 H2O = 2,5-diamino-6-hydroxy-4-(5-phosphoribosylamino)-pyrimidine + formate + 2 phosphate + 3 H(+). Its pathway is cofactor biosynthesis; riboflavin biosynthesis; 5-amino-6-(D-ribitylamino)uracil from GTP: step 1/4. Its function is as follows. Catalyzes the conversion of GTP to 2,5-diamino-6-ribosylamino-4(3H)-pyrimidinone 5'-phosphate (DARP), formate and pyrophosphate. This chain is GTP cyclohydrolase-2, found in Neisseria gonorrhoeae (strain ATCC 700825 / FA 1090).